The following is a 147-amino-acid chain: Cyanate hydratase (147 aa).

Catalysis depends on residues R88, E91, and S114.

Belongs to the cyanase family.

It carries out the reaction cyanate + hydrogencarbonate + 3 H(+) = NH4(+) + 2 CO2. Its function is as follows. Catalyzes the reaction of cyanate with bicarbonate to produce ammonia and carbon dioxide. This is Cyanate hydratase from Parasynechococcus marenigrum (strain WH8102).